Here is a 51-residue protein sequence, read N- to C-terminus: Insulin (51 aa).

3 disulfides stabilise this stretch: cysteine 7-cysteine 37, cysteine 19-cysteine 50, and cysteine 36-cysteine 41.

It belongs to the insulin family. As to quaternary structure, heterodimer of a B chain and an A chain linked by two disulfide bonds.

It localises to the secreted. Insulin decreases blood glucose concentration. It increases cell permeability to monosaccharides, amino acids and fatty acids. It accelerates glycolysis, the pentose phosphate cycle, and glycogen synthesis in liver. The protein is Insulin (INS) of Saimiri sciureus (Common squirrel monkey).